The following is a 606-amino-acid chain: Limonene synthase, chloroplastic (606 aa).

The N-terminal 38 residues, 1–38, are a transit peptide targeting the chloroplast; it reads MAIINLPVPTNSSSEVNKHNHLRSCLPSGRATFTTLSA. (2E)-geranyl diphosphate-binding residues include R320, D357, D361, R497, and D500. Mg(2+)-binding residues include D357 and D361. The DDXXD motif motif lies at 357-361; it reads DDIYD. Mg(2+) contacts are provided by D500, T504, and E508.

This sequence belongs to the terpene synthase family. Tpsb subfamily. In terms of assembly, monomer. Mg(2+) is required as a cofactor. The cofactor is Mn(2+). As to expression, confined to fruits.

It localises to the plastid. Its subcellular location is the chloroplast. The enzyme catalyses (2E,6E)-farnesyl diphosphate = (E)-beta-farnesene + diphosphate. It carries out the reaction (2E)-geranyl diphosphate = limonene + diphosphate. It catalyses the reaction (2E)-geranyl diphosphate = beta-pinene + diphosphate. The catalysed reaction is (2E)-geranyl diphosphate = sabinene + diphosphate. The enzyme catalyses (2E)-geranyl diphosphate = beta-myrcene + diphosphate. It carries out the reaction (2E)-geranyl diphosphate = alpha-pinene + diphosphate. It catalyses the reaction (2E)-geranyl diphosphate = terpinolene + diphosphate. It participates in secondary metabolite biosynthesis; terpenoid biosynthesis. Monoterpene synthase (mono-TPS) involved in the biosynthesis of monoterpenes natural products, constituent of coffee beverage aroma. Catalyzes the conversion of (2E)-geranyl diphosphate (GPP) into limonene, beta-pinene, sabinene and beta-myrcene, and, as minor products, alpha-pinene and alpha-terpinolene. Can also, with a low efficiency, use farnesyl pyrophosphate (FPP) as substrate to produce beta-farnesene. Not able to use geranylgeranyl pyrophosphate (GGPP) as substrate. The protein is Limonene synthase, chloroplastic of Coffea arabica (Arabian coffee).